The following is a 150-amino-acid chain: Sec-independent protein translocase protein TatB (150 aa).

Residues 1 to 21 traverse the membrane as a helical segment; that stretch reads MFDLSWSEIALVGVVALIVIG. The span at 77–86 shows a compositional bias: basic and acidic residues; sequence KIDQAIDPDG. The segment at 77 to 150 is disordered; the sequence is KIDQAIDPDG…RTDGSLPPQD (74 aa). Positions 109 to 135 are enriched in pro residues; sequence AAPPSLPPQAPAQPVPPATGAAPPSPS.

It belongs to the TatB family. As to quaternary structure, the Tat system comprises two distinct complexes: a TatABC complex, containing multiple copies of TatA, TatB and TatC subunits, and a separate TatA complex, containing only TatA subunits. Substrates initially bind to the TatABC complex, which probably triggers association of the separate TatA complex to form the active translocon.

The protein localises to the cell inner membrane. Part of the twin-arginine translocation (Tat) system that transports large folded proteins containing a characteristic twin-arginine motif in their signal peptide across membranes. Together with TatC, TatB is part of a receptor directly interacting with Tat signal peptides. TatB may form an oligomeric binding site that transiently accommodates folded Tat precursor proteins before their translocation. In Rhodospirillum rubrum (strain ATCC 11170 / ATH 1.1.1 / DSM 467 / LMG 4362 / NCIMB 8255 / S1), this protein is Sec-independent protein translocase protein TatB.